A 373-amino-acid polypeptide reads, in one-letter code: Dual-specificity RNA methyltransferase RlmN (373 aa).

Residue Glu94 is the Proton acceptor of the active site. The Radical SAM core domain maps to 100–339 (EDDRATLCVS…VIVRKTRGDD (240 aa)). A disulfide bond links Cys107 and Cys344. Residues Cys114, Cys118, and Cys121 each coordinate [4Fe-4S] cluster. Residues 168-169 (GE), Ser200, 222-224 (SIH), and Asn301 each bind S-adenosyl-L-methionine. The active-site S-methylcysteine intermediate is Cys344.

The protein belongs to the radical SAM superfamily. RlmN family. The cofactor is [4Fe-4S] cluster.

The protein localises to the cytoplasm. The catalysed reaction is adenosine(2503) in 23S rRNA + 2 reduced [2Fe-2S]-[ferredoxin] + 2 S-adenosyl-L-methionine = 2-methyladenosine(2503) in 23S rRNA + 5'-deoxyadenosine + L-methionine + 2 oxidized [2Fe-2S]-[ferredoxin] + S-adenosyl-L-homocysteine. It carries out the reaction adenosine(37) in tRNA + 2 reduced [2Fe-2S]-[ferredoxin] + 2 S-adenosyl-L-methionine = 2-methyladenosine(37) in tRNA + 5'-deoxyadenosine + L-methionine + 2 oxidized [2Fe-2S]-[ferredoxin] + S-adenosyl-L-homocysteine. Functionally, specifically methylates position 2 of adenine 2503 in 23S rRNA and position 2 of adenine 37 in tRNAs. m2A2503 modification seems to play a crucial role in the proofreading step occurring at the peptidyl transferase center and thus would serve to optimize ribosomal fidelity. The sequence is that of Dual-specificity RNA methyltransferase RlmN from Shewanella baltica (strain OS185).